Consider the following 126-residue polypeptide: MKESLLTLTEKIMFTTTVLKPTITTPITMLITTMRTLVAMKIRHYWKMMAIKDRKIQIPPVKYQMELSIRTLEINLLKNVKETEANLLKRRTDRENKRHYEFGFFYNLRIHNIYIPTSFFFFNSIV.

This is an uncharacterized protein from Saccharomyces cerevisiae (strain ATCC 204508 / S288c) (Baker's yeast).